The chain runs to 79 residues: UPF0349 protein BCE_5075 (79 aa).

It belongs to the UPF0349 family.

In Bacillus cereus (strain ATCC 10987 / NRS 248), this protein is UPF0349 protein BCE_5075.